We begin with the raw amino-acid sequence, 128 residues long: NADH-ubiquinone oxidoreductase chain 3 (128 aa).

Helical transmembrane passes span 3-23, 52-72, and 84-104; these read TIYTYLAPIVAMVLVVLNYLI, VAFILVAILFLPFDLEMSSIL, and YGLSILVIFLLSLVIAFVYEI.

It belongs to the complex I subunit 3 family.

The protein resides in the mitochondrion membrane. It carries out the reaction a ubiquinone + NADH + 5 H(+)(in) = a ubiquinol + NAD(+) + 4 H(+)(out). In terms of biological role, core subunit of the mitochondrial membrane respiratory chain NADH dehydrogenase (Complex I) that is believed to belong to the minimal assembly required for catalysis. Complex I functions in the transfer of electrons from NADH to the respiratory chain. The immediate electron acceptor for the enzyme is believed to be ubiquinone. The polypeptide is NADH-ubiquinone oxidoreductase chain 3 (ND3) (Debaryomyces hansenii (strain ATCC 36239 / CBS 767 / BCRC 21394 / JCM 1990 / NBRC 0083 / IGC 2968) (Yeast)).